The primary structure comprises 173 residues: NADH-ubiquinone oxidoreductase chain 6 (173 aa).

The next 5 helical transmembrane spans lie at 1 to 21 (MTYF…AVAS), 27 to 47 (YGVV…MSLG), 48 to 68 (MSFV…VVFV), 87 to 107 (VVGY…VGGL), and 139 to 159 (CGVG…FVVL).

This sequence belongs to the complex I subunit 6 family.

The protein resides in the mitochondrion membrane. It catalyses the reaction a ubiquinone + NADH + 5 H(+)(in) = a ubiquinol + NAD(+) + 4 H(+)(out). Core subunit of the mitochondrial membrane respiratory chain NADH dehydrogenase (Complex I) that is believed to belong to the minimal assembly required for catalysis. Complex I functions in the transfer of electrons from NADH to the respiratory chain. The immediate electron acceptor for the enzyme is believed to be ubiquinone. This is NADH-ubiquinone oxidoreductase chain 6 (MT-ND6) from Synthliboramphus antiquus (Ancient murrelet).